The following is a 398-amino-acid chain: S-adenosylmethionine synthase (398 aa).

The segment at 1–21 (MAANRRLFTSESVTEGHPDKM) is disordered. H17 contacts ATP. Mg(2+) is bound at residue D19. E45 lines the K(+) pocket. L-methionine is bound by residues E58 and Q101. Residues 101-111 (QSADIAGGVNQ) form a flexible loop region. Residues 177 to 179 (DGK), 244 to 245 (RF), D253, 259 to 260 (RK), A276, and K280 each bind ATP. L-methionine is bound at residue D253. An L-methionine-binding site is contributed by K284.

This sequence belongs to the AdoMet synthase family. As to quaternary structure, homotetramer; dimer of dimers. It depends on Mg(2+) as a cofactor. K(+) serves as cofactor.

The protein localises to the cytoplasm. It carries out the reaction L-methionine + ATP + H2O = S-adenosyl-L-methionine + phosphate + diphosphate. It participates in amino-acid biosynthesis; S-adenosyl-L-methionine biosynthesis; S-adenosyl-L-methionine from L-methionine: step 1/1. In terms of biological role, catalyzes the formation of S-adenosylmethionine (AdoMet) from methionine and ATP. The overall synthetic reaction is composed of two sequential steps, AdoMet formation and the subsequent tripolyphosphate hydrolysis which occurs prior to release of AdoMet from the enzyme. This chain is S-adenosylmethionine synthase, found in Oceanobacillus iheyensis (strain DSM 14371 / CIP 107618 / JCM 11309 / KCTC 3954 / HTE831).